A 74-amino-acid polypeptide reads, in one-letter code: ATP synthase subunit c (74 aa).

2 consecutive transmembrane segments (helical) span residues isoleucine 13–isoleucine 33 and isoleucine 51–isoleucine 71.

It belongs to the ATPase C chain family. F-type ATPases have 2 components, F(1) - the catalytic core - and F(0) - the membrane proton channel. F(1) has five subunits: alpha(3), beta(3), gamma(1), delta(1), epsilon(1). F(0) has three main subunits: a(1), b(2) and c(10-14). The alpha and beta chains form an alternating ring which encloses part of the gamma chain. F(1) is attached to F(0) by a central stalk formed by the gamma and epsilon chains, while a peripheral stalk is formed by the delta and b chains.

It is found in the cell inner membrane. Its function is as follows. F(1)F(0) ATP synthase produces ATP from ADP in the presence of a proton or sodium gradient. F-type ATPases consist of two structural domains, F(1) containing the extramembraneous catalytic core and F(0) containing the membrane proton channel, linked together by a central stalk and a peripheral stalk. During catalysis, ATP synthesis in the catalytic domain of F(1) is coupled via a rotary mechanism of the central stalk subunits to proton translocation. Functionally, key component of the F(0) channel; it plays a direct role in translocation across the membrane. A homomeric c-ring of between 10-14 subunits forms the central stalk rotor element with the F(1) delta and epsilon subunits. This is ATP synthase subunit c from Granulibacter bethesdensis (strain ATCC BAA-1260 / CGDNIH1).